The sequence spans 123 residues: T-complex protein 1 subunit alpha (123 aa).

Position 68 (Gly-68) interacts with ADP.

It belongs to the TCP-1 chaperonin family. Component of the chaperonin-containing T-complex (TRiC), a hexadecamer composed of two identical back-to-back stacked rings enclosing a protein folding chamber. Each ring is made up of eight different subunits: TCP1/CCT1, CCT2, CCT3, CCT4, CCT5, CCT6A/CCT6, CCT7, CCT8. Interacts with PACRG. Interacts with GBA1. Interacts with DLEC1.

It localises to the cytoplasm. The protein resides in the cytosol. Its subcellular location is the cytoskeleton. The protein localises to the microtubule organizing center. It is found in the centrosome. The catalysed reaction is ATP + H2O = ADP + phosphate + H(+). In terms of biological role, component of the chaperonin-containing T-complex (TRiC), a molecular chaperone complex that assists the folding of actin, tubulin and other proteins upon ATP hydrolysis. The TRiC complex mediates the folding of WRAP53/TCAB1, thereby regulating telomere maintenance. As part of the TRiC complex may play a role in the assembly of BBSome, a complex involved in ciliogenesis regulating transports vesicles to the cilia. The protein is T-complex protein 1 subunit alpha of Mesocricetus auratus (Golden hamster).